Consider the following 272-residue polypeptide: ATP synthase subunit delta (272 aa).

It belongs to the ATPase delta chain family. As to quaternary structure, F-type ATPases have 2 components, F(1) - the catalytic core - and F(0) - the membrane proton channel. F(1) has five subunits: alpha(3), beta(3), gamma(1), delta(1), epsilon(1). F(0) has three main subunits: a(1), b(2) and c(10-14). The alpha and beta chains form an alternating ring which encloses part of the gamma chain. F(1) is attached to F(0) by a central stalk formed by the gamma and epsilon chains, while a peripheral stalk is formed by the delta and b chains.

Its subcellular location is the cell membrane. F(1)F(0) ATP synthase produces ATP from ADP in the presence of a proton or sodium gradient. F-type ATPases consist of two structural domains, F(1) containing the extramembraneous catalytic core and F(0) containing the membrane proton channel, linked together by a central stalk and a peripheral stalk. During catalysis, ATP synthesis in the catalytic domain of F(1) is coupled via a rotary mechanism of the central stalk subunits to proton translocation. In terms of biological role, this protein is part of the stalk that links CF(0) to CF(1). It either transmits conformational changes from CF(0) to CF(1) or is implicated in proton conduction. The chain is ATP synthase subunit delta from Corynebacterium jeikeium (strain K411).